The chain runs to 101 residues: Small ribosomal subunit protein bS6 (101 aa).

The protein belongs to the bacterial ribosomal protein bS6 family.

Functionally, binds together with bS18 to 16S ribosomal RNA. This Nitratidesulfovibrio vulgaris (strain ATCC 29579 / DSM 644 / CCUG 34227 / NCIMB 8303 / VKM B-1760 / Hildenborough) (Desulfovibrio vulgaris) protein is Small ribosomal subunit protein bS6.